The primary structure comprises 856 residues: DNA mismatch repair protein MutS (856 aa).

An ATP-binding site is contributed by 618–625 (GPNMGGKS).

This sequence belongs to the DNA mismatch repair MutS family.

In terms of biological role, this protein is involved in the repair of mismatches in DNA. It is possible that it carries out the mismatch recognition step. This protein has a weak ATPase activity. The polypeptide is DNA mismatch repair protein MutS (Shewanella baltica (strain OS155 / ATCC BAA-1091)).